The following is a 226-amino-acid chain: MNNKYQIAIDGPASAGKSTVAKIVAKDLQYVYCDTGAMYRVVTLKAIQNGIDLNDETKISEMLNDTDIRFEPGEPVQKVFLDGNEVTEDIRQANVTNSVSTIAAQKAVREVLTNWQRDLAKNGGIVMDGRDIGSAVLPNAEVKIFLIASVQERAERRYKENIAKGMETDLEQLKKEIEIRDHKDSTRKISPLTKASDAIEVDTTSMSIQDVVNEILRIVENASKRK.

11–19 (GPASAGKST) contributes to the ATP binding site.

The protein belongs to the cytidylate kinase family. Type 1 subfamily.

The protein resides in the cytoplasm. It carries out the reaction CMP + ATP = CDP + ADP. It catalyses the reaction dCMP + ATP = dCDP + ADP. This is Cytidylate kinase from Pediococcus pentosaceus (strain ATCC 25745 / CCUG 21536 / LMG 10740 / 183-1w).